The primary structure comprises 716 residues: 1,4-alpha-glucan branching enzyme GlgB (716 aa).

Aspartate 399 (nucleophile) is an active-site residue. Residue glutamate 452 is the Proton donor of the active site.

This sequence belongs to the glycosyl hydrolase 13 family. GlgB subfamily. As to quaternary structure, monomer.

It catalyses the reaction Transfers a segment of a (1-&gt;4)-alpha-D-glucan chain to a primary hydroxy group in a similar glucan chain.. The protein operates within glycan biosynthesis; glycogen biosynthesis. Catalyzes the formation of the alpha-1,6-glucosidic linkages in glycogen by scission of a 1,4-alpha-linked oligosaccharide from growing alpha-1,4-glucan chains and the subsequent attachment of the oligosaccharide to the alpha-1,6 position. This Rhodopseudomonas palustris (strain BisB5) protein is 1,4-alpha-glucan branching enzyme GlgB.